Consider the following 290-residue polypeptide: Formamidopyrimidine-DNA glycosylase (290 aa).

Pro-2 acts as the Schiff-base intermediate with DNA in catalysis. The active-site Proton donor is the Glu-3. Catalysis depends on Lys-58, which acts as the Proton donor; for beta-elimination activity. The DNA site is built by His-98, Arg-126, and Arg-171. Residues Phe-256 to His-290 form an FPG-type zinc finger. Residue Arg-280 is the Proton donor; for delta-elimination activity of the active site.

This sequence belongs to the FPG family. As to quaternary structure, monomer. It depends on Zn(2+) as a cofactor.

It carries out the reaction Hydrolysis of DNA containing ring-opened 7-methylguanine residues, releasing 2,6-diamino-4-hydroxy-5-(N-methyl)formamidopyrimidine.. The catalysed reaction is 2'-deoxyribonucleotide-(2'-deoxyribose 5'-phosphate)-2'-deoxyribonucleotide-DNA = a 3'-end 2'-deoxyribonucleotide-(2,3-dehydro-2,3-deoxyribose 5'-phosphate)-DNA + a 5'-end 5'-phospho-2'-deoxyribonucleoside-DNA + H(+). In terms of biological role, involved in base excision repair of DNA damaged by oxidation or by mutagenic agents. Acts as a DNA glycosylase that recognizes and removes damaged bases. Has a preference for oxidized purines, such as 7,8-dihydro-8-oxoguanine (8-oxoG). Has AP (apurinic/apyrimidinic) lyase activity and introduces nicks in the DNA strand. Cleaves the DNA backbone by beta-delta elimination to generate a single-strand break at the site of the removed base with both 3'- and 5'-phosphates. This Cupriavidus taiwanensis (strain DSM 17343 / BCRC 17206 / CCUG 44338 / CIP 107171 / LMG 19424 / R1) (Ralstonia taiwanensis (strain LMG 19424)) protein is Formamidopyrimidine-DNA glycosylase.